The following is a 121-amino-acid chain: Large ribosomal subunit protein bL19 (121 aa).

Belongs to the bacterial ribosomal protein bL19 family.

In terms of biological role, this protein is located at the 30S-50S ribosomal subunit interface and may play a role in the structure and function of the aminoacyl-tRNA binding site. This is Large ribosomal subunit protein bL19 from Chlorobium phaeovibrioides (strain DSM 265 / 1930) (Prosthecochloris vibrioformis (strain DSM 265)).